Reading from the N-terminus, the 108-residue chain is Urease subunit gamma (108 aa).

This sequence belongs to the urease gamma subunit family. Heterotrimer of UreA (gamma), UreB (beta) and UreC (alpha) subunits. Three heterotrimers associate to form the active enzyme.

Its subcellular location is the cytoplasm. The catalysed reaction is urea + 2 H2O + H(+) = hydrogencarbonate + 2 NH4(+). Its pathway is nitrogen metabolism; urea degradation; CO(2) and NH(3) from urea (urease route): step 1/1. This is Urease subunit gamma from Trichodesmium erythraeum (strain IMS101).